The following is a 536-amino-acid chain: Lysosomal acid glucosylceramidase (536 aa).

Positions 1–39 are cleaved as a signal peptide; it reads MEFSSPSREECPKPSGRVNIMAGSLTGLLLLQAVSWASG. 2 disulfide bridges follow: C43-C55 and C57-C62. N-linked (GlcNAc...) asparagine glycosylation is found at N58, N98, and N185. The active-site Proton donor is E274. A glycan (N-linked (GlcNAc...) asparagine) is linked at N309. The Nucleophile role is filled by E379. A glycan (N-linked (GlcNAc...) asparagine) is linked at N501.

The protein belongs to the glycosyl hydrolase 30 family. As to quaternary structure, interacts with saposin-C. Interacts with SCARB2. Interacts with TCP1. Interacts with GRN; this interaction prevents aggregation of GBA1-SCARB2 complex via interaction with HSPA1A upon stress.

It localises to the lysosome membrane. It carries out the reaction a beta-D-glucosyl-(1&lt;-&gt;1')-N-acylsphing-4-enine + H2O = an N-acylsphing-4-enine + D-glucose. The enzyme catalyses a beta-D-galactosyl-(1&lt;-&gt;1')-N-acylsphing-4-enine + H2O = an N-acylsphing-4-enine + D-galactose. The catalysed reaction is cholesteryl 3-beta-D-glucoside + H2O = cholesterol + D-glucose. It catalyses the reaction a beta-D-glucosyl-(1&lt;-&gt;1')-N-acylsphing-4-enine + cholesterol = cholesteryl 3-beta-D-glucoside + an N-acylsphing-4-enine. It carries out the reaction beta-D-glucosyl-N-(9Z-octadecenoyl)-sphing-4E-enine + cholesterol = N-(9Z-octadecenoyl)-sphing-4-enine + cholesteryl 3-beta-D-glucoside. The enzyme catalyses beta-D-glucosyl-N-octanoylsphing-4E-enine + cholesterol = N-octanoylsphing-4-enine + cholesteryl 3-beta-D-glucoside. The catalysed reaction is beta-D-glucosyl-N-dodecanoylsphing-4-enine + cholesterol = N-dodecanoylsphing-4-enine + cholesteryl 3-beta-D-glucoside. It catalyses the reaction beta-D-glucosyl-(1&lt;-&gt;1)-N-octadecanoylsphing-4-enine + cholesterol = N-octadecanoylsphing-4-enine + cholesteryl 3-beta-D-glucoside. It carries out the reaction beta-D-glucosyl-(1&lt;-&gt;1')-N-(15Z-tetracosenoyl)-sphing-4-enine + cholesterol = N-(15Z-tetracosenoyl)-sphing-4-enine + cholesteryl 3-beta-D-glucoside. The enzyme catalyses a beta-D-galactosyl-(1&lt;-&gt;1')-N-acylsphing-4-enine + cholesterol = cholesteryl 3-beta-D-galactoside + an N-acylsphing-4-enine. The catalysed reaction is 1-(beta-D-galactosyl)-N-dodecanoylsphing-4-enine + cholesterol = cholesteryl 3-beta-D-galactoside + N-dodecanoylsphing-4-enine. It catalyses the reaction a beta-D-xylosyl-(1&lt;-&gt;1')-N-acylsphing-4-enine + cholesterol = cholesteryl 3-beta-D-xyloside + an N-acylsphing-4-enine. It carries out the reaction beta-D-xylosyl-(1&lt;-&gt;1')-N-(9Z-octadecenoyl)-sphing-4-enine + cholesterol = cholesteryl 3-beta-D-xyloside + N-(9Z-octadecenoyl)-sphing-4-enine. It participates in steroid metabolism; cholesterol metabolism. The protein operates within sphingolipid metabolism. In terms of biological role, glucosylceramidase that catalyzes, within the lysosomal compartment, the hydrolysis of glucosylceramides/GlcCers (such as beta-D-glucosyl-(1&lt;-&gt;1')-N-acylsphing-4-enine) into free ceramides (such as N-acylsphing-4-enine) and glucose. Plays a central role in the degradation of complex lipids and the turnover of cellular membranes. Through the production of ceramides, participates in the PKC-activated salvage pathway of ceramide formation. Catalyzes the glucosylation of cholesterol, through a transglucosylation reaction where glucose is transferred from GlcCer to cholesterol. GlcCer containing mono-unsaturated fatty acids (such as beta-D-glucosyl-N-(9Z-octadecenoyl)-sphing-4-enine) are preferred as glucose donors for cholesterol glucosylation when compared with GlcCer containing same chain length of saturated fatty acids (such as beta-D-glucosyl-N-octadecanoyl-sphing-4-enine). Under specific conditions, may alternatively catalyze the reverse reaction, transferring glucose from cholesteryl 3-beta-D-glucoside to ceramide. Can also hydrolyze cholesteryl 3-beta-D-glucoside producing glucose and cholesterol. Catalyzes the hydrolysis of galactosylceramides/GalCers (such as beta-D-galactosyl-(1&lt;-&gt;1')-N-acylsphing-4-enine), as well as the transfer of galactose between GalCers and cholesterol in vitro, but with lower activity than with GlcCers. Contrary to GlcCer and GalCer, xylosylceramide/XylCer (such as beta-D-xyosyl-(1&lt;-&gt;1')-N-acylsphing-4-enine) is not a good substrate for hydrolysis, however it is a good xylose donor for transxylosylation activity to form cholesteryl 3-beta-D-xyloside. This chain is Lysosomal acid glucosylceramidase (GBA1), found in Pongo abelii (Sumatran orangutan).